A 225-amino-acid polypeptide reads, in one-letter code: Orotate phosphoribosyltransferase (225 aa).

Residues Arg107, Lys108, Lys111, and 133–141 (EDLTTDGGS) each bind 5-phospho-alpha-D-ribose 1-diphosphate. Orotate is bound at residue Thr137.

This sequence belongs to the purine/pyrimidine phosphoribosyltransferase family. PyrE subfamily. Homodimer. Mg(2+) serves as cofactor.

It catalyses the reaction orotidine 5'-phosphate + diphosphate = orotate + 5-phospho-alpha-D-ribose 1-diphosphate. Its pathway is pyrimidine metabolism; UMP biosynthesis via de novo pathway; UMP from orotate: step 1/2. Its function is as follows. Catalyzes the transfer of a ribosyl phosphate group from 5-phosphoribose 1-diphosphate to orotate, leading to the formation of orotidine monophosphate (OMP). The sequence is that of Orotate phosphoribosyltransferase from Roseobacter denitrificans (strain ATCC 33942 / OCh 114) (Erythrobacter sp. (strain OCh 114)).